Here is a 291-residue protein sequence, read N- to C-terminus: 4-hydroxy-tetrahydrodipicolinate synthase (291 aa).

Thr-44 is a binding site for pyruvate. Tyr-132 serves as the catalytic Proton donor/acceptor. Lys-160 (schiff-base intermediate with substrate) is an active-site residue. Ile-202 contacts pyruvate.

The protein belongs to the DapA family. As to quaternary structure, homotetramer; dimer of dimers.

It localises to the cytoplasm. It catalyses the reaction L-aspartate 4-semialdehyde + pyruvate = (2S,4S)-4-hydroxy-2,3,4,5-tetrahydrodipicolinate + H2O + H(+). It participates in amino-acid biosynthesis; L-lysine biosynthesis via DAP pathway; (S)-tetrahydrodipicolinate from L-aspartate: step 3/4. Catalyzes the condensation of (S)-aspartate-beta-semialdehyde [(S)-ASA] and pyruvate to 4-hydroxy-tetrahydrodipicolinate (HTPA). This is 4-hydroxy-tetrahydrodipicolinate synthase from Rhodospirillum centenum (strain ATCC 51521 / SW).